We begin with the raw amino-acid sequence, 401 residues long: MAGATVTVEEVRKAQRATGPATVLAIGTATPANCVHQADYPDYYFRITKSEHMTELKEKFKRMCDKSQIRKRYMHLTEEYLAENPNMCAYMAPSLDARQDIVVVEVPKLGKAAAQKAIKEWGQPKSKITHLVFCTTSGVDMPGADYQLTKMLGLRPSVNRLMMYQQGCFAGGTVLRVAKDLAENNRGARVLVVCSEITAVTFRGPSESHLDSMVGQALFGDGAAAVIVGADPDERVERPLFQLVSASQTILPDSEGAIDGHLREVGLTFHLLKDVPGLISKNIERSLEEAFKPLGITDYNSIFWVAHPGGPAILDQVEAKVGLKKERMRATRHVLSEYGNMSSACVLFILDEMRKRSAEDGQATTGEGFDWGVLFGFGPGLTVETVVLHSVPITTGATITA.

Cys-168 is a catalytic residue.

It belongs to the thiolase-like superfamily. Chalcone/stilbene synthases family.

The enzyme catalyses (E)-4-coumaroyl-CoA + 3 malonyl-CoA + 3 H(+) = 2',4,4',6'-tetrahydroxychalcone + 3 CO2 + 4 CoA. Its pathway is secondary metabolite biosynthesis; flavonoid biosynthesis. In terms of biological role, the primary product of this enzyme is 4,2',4',6'-tetrahydroxychalcone (also termed naringenin-chalcone or chalcone) which can under specific conditions spontaneously isomerize into naringenin. The sequence is that of Chalcone synthase 6 (CHS6) from Sorghum bicolor (Sorghum).